The sequence spans 278 residues: Sulfur carrier protein FdhD (278 aa).

The active-site Cysteine persulfide intermediate is cysteine 121. 260–265 (FCKPGR) serves as a coordination point for Mo-bis(molybdopterin guanine dinucleotide).

It belongs to the FdhD family.

Its subcellular location is the cytoplasm. In terms of biological role, required for formate dehydrogenase (FDH) activity. Acts as a sulfur carrier protein that transfers sulfur from IscS to the molybdenum cofactor prior to its insertion into FDH. The sequence is that of Sulfur carrier protein FdhD from Klebsiella pneumoniae subsp. pneumoniae (strain ATCC 700721 / MGH 78578).